Consider the following 189-residue polypeptide: 3-hydroxyanthranilate 3,4-dioxygenase (189 aa).

R46 provides a ligand contact to O2. Residues H50, E56, and H94 each contribute to the Fe cation site. Residue E56 participates in substrate binding. R98 and E109 together coordinate substrate. Residues C124, C127, C161, and C164 each coordinate Fe cation.

This sequence belongs to the 3-HAO family. In terms of assembly, homodimer. It depends on Fe(2+) as a cofactor.

The catalysed reaction is 3-hydroxyanthranilate + O2 = (2Z,4Z)-2-amino-3-carboxymuconate 6-semialdehyde. Its pathway is cofactor biosynthesis; NAD(+) biosynthesis; quinolinate from L-kynurenine: step 3/3. Its function is as follows. Catalyzes the oxidative ring opening of 3-hydroxyanthranilate to 2-amino-3-carboxymuconate semialdehyde, which spontaneously cyclizes to quinolinate. This Shewanella woodyi (strain ATCC 51908 / MS32) protein is 3-hydroxyanthranilate 3,4-dioxygenase.